Here is a 674-residue protein sequence, read N- to C-terminus: DNA ligase (674 aa).

NAD(+)-binding positions include 34-38, 84-85, and E116; these read DAEYD and SL. The active-site N6-AMP-lysine intermediate is the K118. NAD(+)-binding residues include R139, E174, K291, and K315. C409, C412, C425, and C430 together coordinate Zn(2+). Positions 586 to 674 constitute a BRCT domain; it reads RGEEALKGLT…TGKPVETLAS (89 aa).

This sequence belongs to the NAD-dependent DNA ligase family. LigA subfamily. Mg(2+) is required as a cofactor. The cofactor is Mn(2+).

The catalysed reaction is NAD(+) + (deoxyribonucleotide)n-3'-hydroxyl + 5'-phospho-(deoxyribonucleotide)m = (deoxyribonucleotide)n+m + AMP + beta-nicotinamide D-nucleotide.. Functionally, DNA ligase that catalyzes the formation of phosphodiester linkages between 5'-phosphoryl and 3'-hydroxyl groups in double-stranded DNA using NAD as a coenzyme and as the energy source for the reaction. It is essential for DNA replication and repair of damaged DNA. This chain is DNA ligase, found in Thermus scotoductus.